Consider the following 385-residue polypeptide: ATP phosphoribosyltransferase regulatory subunit (385 aa).

The protein belongs to the class-II aminoacyl-tRNA synthetase family. HisZ subfamily. In terms of assembly, heteromultimer composed of HisG and HisZ subunits.

Its subcellular location is the cytoplasm. Its pathway is amino-acid biosynthesis; L-histidine biosynthesis; L-histidine from 5-phospho-alpha-D-ribose 1-diphosphate: step 1/9. Its function is as follows. Required for the first step of histidine biosynthesis. May allow the feedback regulation of ATP phosphoribosyltransferase activity by histidine. The polypeptide is ATP phosphoribosyltransferase regulatory subunit (Lysinibacillus sphaericus (strain C3-41)).